The following is a 563-amino-acid chain: Arginine--tRNA ligase (563 aa).

The 'HIGH' region motif lies at 121 to 131; it reads PNIAKPFSIGH.

This sequence belongs to the class-I aminoacyl-tRNA synthetase family. As to quaternary structure, monomer.

The protein resides in the cytoplasm. The catalysed reaction is tRNA(Arg) + L-arginine + ATP = L-arginyl-tRNA(Arg) + AMP + diphosphate. The protein is Arginine--tRNA ligase of Streptococcus pyogenes serotype M2 (strain MGAS10270).